We begin with the raw amino-acid sequence, 223 residues long: Phosphoribosylformylglycinamidine synthase subunit PurQ (223 aa).

A Glutamine amidotransferase type-1 domain is found at 4 to 223; it reads KIGVITFPGT…FLSAVGTIAA (220 aa). Cysteine 87 functions as the Nucleophile in the catalytic mechanism. Residues histidine 195 and glutamate 197 contribute to the active site.

In terms of assembly, part of the FGAM synthase complex composed of 1 PurL, 1 PurQ and 2 PurS subunits.

The protein resides in the cytoplasm. The catalysed reaction is N(2)-formyl-N(1)-(5-phospho-beta-D-ribosyl)glycinamide + L-glutamine + ATP + H2O = 2-formamido-N(1)-(5-O-phospho-beta-D-ribosyl)acetamidine + L-glutamate + ADP + phosphate + H(+). The enzyme catalyses L-glutamine + H2O = L-glutamate + NH4(+). It participates in purine metabolism; IMP biosynthesis via de novo pathway; 5-amino-1-(5-phospho-D-ribosyl)imidazole from N(2)-formyl-N(1)-(5-phospho-D-ribosyl)glycinamide: step 1/2. Its function is as follows. Part of the phosphoribosylformylglycinamidine synthase complex involved in the purines biosynthetic pathway. Catalyzes the ATP-dependent conversion of formylglycinamide ribonucleotide (FGAR) and glutamine to yield formylglycinamidine ribonucleotide (FGAM) and glutamate. The FGAM synthase complex is composed of three subunits. PurQ produces an ammonia molecule by converting glutamine to glutamate. PurL transfers the ammonia molecule to FGAR to form FGAM in an ATP-dependent manner. PurS interacts with PurQ and PurL and is thought to assist in the transfer of the ammonia molecule from PurQ to PurL. The protein is Phosphoribosylformylglycinamidine synthase subunit PurQ of Corynebacterium glutamicum (strain ATCC 13032 / DSM 20300 / JCM 1318 / BCRC 11384 / CCUG 27702 / LMG 3730 / NBRC 12168 / NCIMB 10025 / NRRL B-2784 / 534).